The sequence spans 1379 residues: DNA-directed RNA polymerase subunit beta'' (1379 aa).

The Zn(2+) site is built by cysteine 220, cysteine 291, cysteine 298, and cysteine 301.

This sequence belongs to the RNA polymerase beta' chain family. RpoC2 subfamily. In terms of assembly, in plastids the minimal PEP RNA polymerase catalytic core is composed of four subunits: alpha, beta, beta', and beta''. When a (nuclear-encoded) sigma factor is associated with the core the holoenzyme is formed, which can initiate transcription. Requires Zn(2+) as cofactor.

The protein localises to the plastid. The catalysed reaction is RNA(n) + a ribonucleoside 5'-triphosphate = RNA(n+1) + diphosphate. In terms of biological role, DNA-dependent RNA polymerase catalyzes the transcription of DNA into RNA using the four ribonucleoside triphosphates as substrates. This is DNA-directed RNA polymerase subunit beta'' from Cuscuta reflexa (Southern Asian dodder).